The primary structure comprises 203 residues: RNA pyrophosphohydrolase (203 aa).

One can recognise a Nudix hydrolase domain in the interval 6 to 149; sequence GFRPNVGIIL…KRNVYQMALT (144 aa). The Nudix box signature appears at 38–59; that stretch reads GGIKHGESPEQAMFRELHEEVG. Residues 170-203 are disordered; sequence RAHRRDEGSEHNDHLDPTGPHDAGASVSEPKQAE. The segment covering 173 to 185 has biased composition (basic and acidic residues); the sequence is RRDEGSEHNDHLD.

It belongs to the Nudix hydrolase family. RppH subfamily. A divalent metal cation is required as a cofactor.

In terms of biological role, accelerates the degradation of transcripts by removing pyrophosphate from the 5'-end of triphosphorylated RNA, leading to a more labile monophosphorylated state that can stimulate subsequent ribonuclease cleavage. The protein is RNA pyrophosphohydrolase of Leptothrix cholodnii (strain ATCC 51168 / LMG 8142 / SP-6) (Leptothrix discophora (strain SP-6)).